The primary structure comprises 29 residues: Mycofactocin precursor peptide (29 aa).

Belongs to the mycofactocin precursor peptide family. Post-translationally, the post-translational modifications that lead to mycofactocin involve oxidative decarboxylation of the C-terminal tyrosine residue catalyzed by MftC, introduction of a tyramine-valine cross-link, removal of the modified C-terminal dipeptide by MftE. The released dipeptide then undergoes oxidative deamination by MftD, glycosylation by MftF and methylation by an unknown enzyme.

Functionally, precursor peptide that leads to mycofactocin (MFT) after extensive post-translational modifications by enzymes encoded by adjacent genes. Mycofactocin acts as a redox cofactor of nicotinamide-dependent oxidoreductases encoded in the same locus. The polypeptide is Mycofactocin precursor peptide (Mycobacterium tuberculosis (strain ATCC 25618 / H37Rv)).